The sequence spans 498 residues: Glycerol kinase (498 aa).

T11 is a binding site for ADP. T11, S12, and S13 together coordinate ATP. Sn-glycerol 3-phosphate is bound at residue T11. Residue R15 participates in ADP binding. R81, E82, Y133, and D242 together coordinate sn-glycerol 3-phosphate. The glycerol site is built by R81, E82, Y133, D242, and Q243. Positions 264 and 307 each coordinate ADP. T264, G307, Q311, and G408 together coordinate ATP. The ADP site is built by G408 and N412.

The protein belongs to the FGGY kinase family.

It catalyses the reaction glycerol + ATP = sn-glycerol 3-phosphate + ADP + H(+). It participates in polyol metabolism; glycerol degradation via glycerol kinase pathway; sn-glycerol 3-phosphate from glycerol: step 1/1. Inhibited by fructose 1,6-bisphosphate (FBP). Key enzyme in the regulation of glycerol uptake and metabolism. Catalyzes the phosphorylation of glycerol to yield sn-glycerol 3-phosphate. The sequence is that of Glycerol kinase from Ralstonia pickettii (strain 12J).